A 229-amino-acid chain; its full sequence is Clathrin light chain (229 aa).

Disordered regions lie at residues 1-24 (MSQF…DSKN) and 76-132 (EMQA…KLRE). The segment covering 107 to 132 (EPVRKWKEDQMKRIQERDESSKKLRE) has biased composition (basic and acidic residues). The residue at position 229 (S229) is a Phosphoserine.

The protein belongs to the clathrin light chain family. As to quaternary structure, clathrin coats are formed from molecules containing 3 heavy chains and 3 light chains.

Its subcellular location is the cytoplasmic vesicle membrane. It is found in the membrane. The protein localises to the coated pit. Its function is as follows. Clathrin is the major protein of the polyhedral coat of coated pits and vesicles. The chain is Clathrin light chain (clc1) from Schizosaccharomyces pombe (strain 972 / ATCC 24843) (Fission yeast).